Consider the following 410-residue polypeptide: MIVKVSNLGGSGIAEMPSSKSFTQRYVLASAFLNKSVVLNGITITNDDDVAMRIAESVGSTITINNRSIKISSNFKCPEEIYVGESGTSYRLSIGLLAASGCVTRIKGEDSLAKRPIEPLLMALGENGVKFERNEAGFYNVDGRNSQKKHVEIEGSSSQFVSSLMLYYAKKGGGEFTARNIKSIGYVYITKRVLYDLGYFANIERTITINPTGVWKTAIDVEPDYSSMAFFMVLGLLSDSVDVRFRIKRISRIQPDSVILDLFKNNILINGEEIRVISGINEPVSVDADMNPDLCPPLSVIGIFSKYGVQIRNYERLKTKESNRYEGIIDLAERFGANVEDNGQDLFIKPGSVRFPDVISYKDHRMIMAASIASLIGGFPTVIENAEKTAKSFPGFFAELSKFANVEELA.

Lys20, Ser21, and Arg25 together coordinate 3-phosphoshikimate. Residue Lys20 participates in phosphoenolpyruvate binding. Phosphoenolpyruvate contacts are provided by Gly87 and Arg115. Residues Ser157, Ser158, Gln159, Ser183, Asp293, and Lys320 each contribute to the 3-phosphoshikimate site. Gln159 is a phosphoenolpyruvate binding site. The active-site Proton acceptor is the Asp293. 3 residues coordinate phosphoenolpyruvate: Arg324, Arg365, and Lys391.

The protein belongs to the EPSP synthase family. In terms of assembly, monomer.

It localises to the cytoplasm. It catalyses the reaction 3-phosphoshikimate + phosphoenolpyruvate = 5-O-(1-carboxyvinyl)-3-phosphoshikimate + phosphate. Its pathway is metabolic intermediate biosynthesis; chorismate biosynthesis. Functionally, catalyzes the transfer of the enolpyruvyl moiety of phosphoenolpyruvate (PEP) to the 5-hydroxyl of shikimate-3-phosphate (S3P) to produce enolpyruvyl shikimate-3-phosphate and inorganic phosphate. The polypeptide is 3-phosphoshikimate 1-carboxyvinyltransferase (Thermoplasma volcanium (strain ATCC 51530 / DSM 4299 / JCM 9571 / NBRC 15438 / GSS1)).